Here is a 701-residue protein sequence, read N- to C-terminus: Polyribonucleotide nucleotidyltransferase (701 aa).

2 residues coordinate Mg(2+): Asp-487 and Asp-493. One can recognise a KH domain in the interval Pro-554 to Val-613. The region spanning Gly-623–Lys-691 is the S1 motif domain.

The protein belongs to the polyribonucleotide nucleotidyltransferase family. In terms of assembly, component of the RNA degradosome, which is a multiprotein complex involved in RNA processing and mRNA degradation. It depends on Mg(2+) as a cofactor.

The protein localises to the cytoplasm. It carries out the reaction RNA(n+1) + phosphate = RNA(n) + a ribonucleoside 5'-diphosphate. In terms of biological role, involved in mRNA degradation. Catalyzes the phosphorolysis of single-stranded polyribonucleotides processively in the 3'- to 5'-direction. The polypeptide is Polyribonucleotide nucleotidyltransferase (Pseudomonas fluorescens (strain SBW25)).